A 463-amino-acid polypeptide reads, in one-letter code: MSENNCSKPSFPDNAASKEYAASLDAADPLASFRDQFIIPSKANIACKRLAKPNLSPEPCIYFCGNSLGIQPKATAKYLEAQLDTWSSIGVCGHFTNLEDSPMKSWQLLAEQAAESMSKIVGADPAEVAAMGTLTANLHLLMASFYKPTATKHKILMDWKAFPSDHYAIESHIAWHNLDPKESMVLIGPDEGEYEISTDKILSYIDQHAEDAALLLLPGIQYYTGQLFDIPKITEYAKSRNLVVGWDLAHAYGNVELKLHDWNVDFAAWCTYKYGNAGPGAMAGLFVHDKHGQVDYSQGEDSPKFRHRLTGWYGGDRSVRFKMDNKFKPIPGAGGFQISNPSAIDLSCLCAALSVFDQTSVSELRRKSLKLTAYLEYLLLKDTTEDSRPFRIITPTNPEARGAQLSLLLKPGLLQGVSERLQDAGIICDKREPGVVRVAPVPLYNTYSEVWEFVQQFRAALQL.

Pyridoxal 5'-phosphate is bound by residues Leu134, Thr135, 162 to 165 (FPSD), Asp247, His250, and Tyr272. N6-(pyridoxal phosphate)lysine is present on Lys273. Pyridoxal 5'-phosphate-binding residues include Trp312 and Asn340.

The protein belongs to the kynureninase family. In terms of assembly, homodimer. It depends on pyridoxal 5'-phosphate as a cofactor.

It localises to the cytoplasm. The catalysed reaction is L-kynurenine + H2O = anthranilate + L-alanine + H(+). The enzyme catalyses 3-hydroxy-L-kynurenine + H2O = 3-hydroxyanthranilate + L-alanine + H(+). It functions in the pathway amino-acid degradation; L-kynurenine degradation; L-alanine and anthranilate from L-kynurenine: step 1/1. The protein operates within cofactor biosynthesis; NAD(+) biosynthesis; quinolinate from L-kynurenine: step 2/3. In terms of biological role, catalyzes the cleavage of L-kynurenine (L-Kyn) and L-3-hydroxykynurenine (L-3OHKyn) into anthranilic acid (AA) and 3-hydroxyanthranilic acid (3-OHAA), respectively. This is Kynureninase 2 (bna5-2) from Aspergillus terreus (strain NIH 2624 / FGSC A1156).